Here is a 1486-residue protein sequence, read N- to C-terminus: Chromosome partition protein MukB (1486 aa).

34–41 (GGNGAGKS) lines the ATP pocket. Coiled-coil stretches lie at residues 334-418 (SDHL…QYNQ), 444-480 (LETFQAKEQEATEKMLSLEQKMSMAQTAHSQFEQAYQ), and 509-603 (RHLA…RAPV). The interval 666–783 (PGGSEDQRLN…EVPLFGRAAR (118 aa)) is flexible hinge. Coiled coils occupy residues 835–923 (EAEI…AKLE), 977–1115 (EMLS…TAKA), and 1209–1266 (VEAI…QNVS).

This sequence belongs to the SMC family. MukB subfamily. As to quaternary structure, homodimerization via its hinge domain. Binds to DNA via its C-terminal region. Interacts, and probably forms a ternary complex, with MukE and MukF via its C-terminal region. The complex formation is stimulated by calcium or magnesium. Interacts with tubulin-related protein FtsZ.

The protein resides in the cytoplasm. Its subcellular location is the nucleoid. Functionally, plays a central role in chromosome condensation, segregation and cell cycle progression. Functions as a homodimer, which is essential for chromosome partition. Involved in negative DNA supercoiling in vivo, and by this means organize and compact chromosomes. May achieve or facilitate chromosome segregation by condensation DNA from both sides of a centrally located replisome during cell division. The protein is Chromosome partition protein MukB of Shigella sonnei (strain Ss046).